Consider the following 461-residue polypeptide: Zinc transporter 6 (461 aa).

Residues Met-1–Lys-33 are Cytoplasmic-facing. Residues Ile-34–Ser-54 traverse the membrane as a helical segment. The Extracellular segment spans residues Thr-55–Thr-64. A helical transmembrane segment spans residues Tyr-65–Leu-85. Residues Arg-86–Arg-98 are Cytoplasmic-facing. A helical membrane pass occupies residues Leu-99–Leu-119. At Lys-120 to Thr-134 the chain is on the extracellular side. The helical transmembrane segment at Gly-135–Ile-155 threads the bilayer. Residues Arg-156 to Pro-200 lie on the Cytoplasmic side of the membrane. A helical transmembrane segment spans residues Phe-201 to Ile-221. The Extracellular segment spans residues Asn-222–Asn-223. A helical membrane pass occupies residues Tyr-224 to Tyr-244. Over Pro-245–Pro-461 the chain is Cytoplasmic. Residues Asn-371 to Pro-392 form a disordered region.

This sequence belongs to the cation diffusion facilitator (CDF) transporter (TC 2.A.4) family. SLC30A subfamily. In terms of assembly, heterodimer with SLC30A5; form a functional zinc ion transmembrane transporter. As to expression, expressed in brain; especially in cerebellum, hippocampus, parahippocampal gyrus, superior and middle temporal gyrus. Also expressed in B-cells, colon, eye, and lung. Lower expression was present in bone, brain, cervix, ear, heart, kidney, muscle, nerve, pancreas, prostate, skin, stomach, and testis.

The protein resides in the golgi apparatus. Its subcellular location is the trans-Golgi network membrane. Has probably no intrinsic transporter activity but together with SLC30A5 forms a functional zinc ion:proton antiporter heterodimer, mediating zinc entry into the lumen of organelles along the secretory pathway. As part of that zinc ion:proton antiporter, contributes to zinc ion homeostasis within the early secretory pathway and regulates the activation and folding of enzymes like alkaline phosphatases and enzymes involved in phosphatidylinositol glycan anchor biosynthesis. This chain is Zinc transporter 6, found in Homo sapiens (Human).